Consider the following 239-residue polypeptide: MAGHSKWANIQHRKGRQDEKRGRIWTRIMREITVAARAGGGDLSANPRLRLALDKARAANMPAERIKYNIDKATGNAEGQSYEEIRYEGYGIGGAAIIVDTMTDNRLRTVAEVRHAFSKHGANMGTEGSVVFQFKHCGQLVYAPGSSEDQVMEVALQAGAEDVIMGEDGAIEVLTLPADFEAVKNALQAAGLRPELAEVTMRAENTIELQGEDAARMQKLLDALEDLDDTQAVYHNATL.

The tract at residues 1-22 (MAGHSKWANIQHRKGRQDEKRG) is disordered.

This sequence belongs to the TACO1 family.

Its subcellular location is the cytoplasm. The sequence is that of Probable transcriptional regulatory protein Veis_4238 from Verminephrobacter eiseniae (strain EF01-2).